An 89-amino-acid polypeptide reads, in one-letter code: Mu-theraphotoxin-Phlo1a (89 aa).

A signal peptide spans 1–22 (MKVSVLITLAVLGVMFVWTSAA). Positions 23 to 52 (EQEDHGSDRRDSPALLKNLLGEEVFQSEER) are excised as a propeptide. Disulfide bonds link C54/C68, C61/C73, and C67/C81. Position 87 is an isoleucine amide (I87).

Belongs to the neurotoxin 10 (Hwtx-1) family. 39 (Jztx-34) subfamily. In terms of tissue distribution, expressed by the venom gland.

It is found in the secreted. Gating-modifier toxin that inhibits voltage-gated sodium channel Nav by shifting the threshold for channel activation to more positive potentials. This toxin moderately inhibits human Nav1.7/SCN9A (IC(50)=459 nM) and weakly inhibits hNav1.2/SCN2A and hNav1.5/SCN5A (&lt;20% inhibition at 1 uM peptide). Inhibition of Nav1.7 is voltage-dependent, with lower inhibition at more positive test pulses. This Phlogius sp. (Tarantula spider) protein is Mu-theraphotoxin-Phlo1a.